The following is a 307-amino-acid chain: Nicotinamide/nicotinic acid mononucleotide adenylyltransferase 2 (307 aa).

2 residues coordinate NAD(+): Ser-16 and Phe-17. An ATP-binding site is contributed by His-24. Positions 92 and 95 each coordinate NAD(+). 2 S-palmitoyl cysteine lipidation sites follow: Cys-164 and Cys-165. NAD(+)-binding residues include Gly-200, Asp-202, Leu-212, Trp-213, and Arg-232. Residue 271–274 (TKSR) participates in ATP binding.

This sequence belongs to the eukaryotic NMN adenylyltransferase family. In terms of assembly, monomer. Mg(2+) is required as a cofactor. Post-translationally, degraded in response to injured neurite. Degradation is caused by polyubiquitination by MYCBP2 after recognition by FBXO45. Palmitoylated; palmitoylation is required for membrane association. Expressed predominantly in the brain and nervous system.

It is found in the golgi apparatus membrane. Its subcellular location is the cytoplasmic vesicle membrane. The protein localises to the cytoplasm. It localises to the cell projection. The protein resides in the axon. It catalyses the reaction beta-nicotinamide D-ribonucleotide + ATP + H(+) = diphosphate + NAD(+). It carries out the reaction nicotinate beta-D-ribonucleotide + ATP + H(+) = deamido-NAD(+) + diphosphate. It participates in cofactor biosynthesis; NAD(+) biosynthesis; NAD(+) from nicotinamide D-ribonucleotide: step 1/1. Its pathway is cofactor biosynthesis; NAD(+) biosynthesis; deamido-NAD(+) from nicotinate D-ribonucleotide: step 1/1. Inhibited by P1-(adenosine-5')-P3-(nicotinamide-riboside-5')-triphosphate (Np3AD) and P1-(adenosine-5')-P4-(nicotinamide-riboside-5')-tetraphosphate (Np4AD). Nicotinamide/nicotinate-nucleotide adenylyltransferase that acts as an axon maintenance factor. Axon survival factor required for the maintenance of healthy axons: acts by delaying Wallerian axon degeneration, an evolutionarily conserved process that drives the loss of damaged axons. Catalyzes the formation of NAD(+) from nicotinamide mononucleotide (NMN) and ATP. Can also use the deamidated form; nicotinic acid mononucleotide (NaMN) as substrate but with a lower efficiency. Cannot use triazofurin monophosphate (TrMP) as substrate. Also catalyzes the reverse reaction, i.e. the pyrophosphorolytic cleavage of NAD(+). For the pyrophosphorolytic activity prefers NAD(+), NADH and NaAD as substrates and degrades nicotinic acid adenine dinucleotide phosphate (NHD) less effectively. Fails to cleave phosphorylated dinucleotides NADP(+), NADPH and NaADP(+). Also acts as an activator of ADP-ribosylation by supporting the catalytic activity of PARP16 and promoting mono-ADP-ribosylation of ribosomes by PARP16. May be involved in the maintenance of axonal integrity. The sequence is that of Nicotinamide/nicotinic acid mononucleotide adenylyltransferase 2 from Mus musculus (Mouse).